The chain runs to 164 residues: Aspartic proteinase nepenthesin-1 (164 aa).

A Peptidase A1 domain is found at tyrosine 17–alanine 164. The active site involves aspartate 35. An N-linked (GlcNAc...) asparagine glycan is attached at asparagine 93.

Belongs to the peptidase A1 family. In terms of tissue distribution, parenchymal cells surrounding the secretory glands.

It localises to the secreted. The catalysed reaction is Similar to pepsin, but also cleaves on either side of Asp and at Lys-|-Arg.. Its activity is regulated as follows. Inhibited by pepstatin and by diazoacetyl-D,L-norleucine methyl ester (DAN) in the presence of Cu(2+) ions. Its function is as follows. Extracellular proteinase found in the pitcher fluid of carnivorous plants. Digest prey for nitrogen uptake. This chain is Aspartic proteinase nepenthesin-1, found in Nepenthes distillatoria (Pitcher plant).